A 264-amino-acid polypeptide reads, in one-letter code: MRFKELVFLLKIDEEELLEKLYEEGFFNFAIEENKEGDRLLRVYLREGETLPSFLSNWKILDERLTTPKDWMVELEPFEIVEDVVVDPTEKVTRTDKIVVKLSPGVAFGTGLHPTTQMSVFFLKKYLKKGDRVVDVGCGTGILAIVAKKLGASYVMAVDVDEQAVEVAKENVQKNSVDVIVKRSDLLSEVDGVFDLVVSNILAEIHLRLLEDVDRITHERSILILSGIVDTKENMVREKASKKGWNLLERKQEREWVTLVMKRS.

4 residues coordinate S-adenosyl-L-methionine: threonine 116, glycine 137, aspartate 159, and asparagine 200.

The protein belongs to the methyltransferase superfamily. PrmA family.

It localises to the cytoplasm. The catalysed reaction is L-lysyl-[protein] + 3 S-adenosyl-L-methionine = N(6),N(6),N(6)-trimethyl-L-lysyl-[protein] + 3 S-adenosyl-L-homocysteine + 3 H(+). Methylates ribosomal protein L11. In Thermotoga neapolitana (strain ATCC 49049 / DSM 4359 / NBRC 107923 / NS-E), this protein is Ribosomal protein L11 methyltransferase.